We begin with the raw amino-acid sequence, 329 residues long: Phosphate acyltransferase (329 aa).

This sequence belongs to the PlsX family. As to quaternary structure, homodimer. Probably interacts with PlsY.

Its subcellular location is the cytoplasm. The catalysed reaction is a fatty acyl-[ACP] + phosphate = an acyl phosphate + holo-[ACP]. Its pathway is lipid metabolism; phospholipid metabolism. Catalyzes the reversible formation of acyl-phosphate (acyl-PO(4)) from acyl-[acyl-carrier-protein] (acyl-ACP). This enzyme utilizes acyl-ACP as fatty acyl donor, but not acyl-CoA. In Shouchella clausii (strain KSM-K16) (Alkalihalobacillus clausii), this protein is Phosphate acyltransferase.